Consider the following 177-residue polypeptide: Thymidine kinase (177 aa).

Gly11–Ser18 contacts ATP. Residue Glu83 is the Proton acceptor of the active site. Residue Phe113 participates in substrate binding. Positions 138 and 141 each coordinate Zn(2+). Residue Ile157–Gly161 participates in substrate binding. Positions 170 and 173 each coordinate Zn(2+).

Belongs to the thymidine kinase family.

It carries out the reaction thymidine + ATP = dTMP + ADP + H(+). The polypeptide is Thymidine kinase (TK) (Sheeppox virus (strain KS-1) (SPPV)).